The primary structure comprises 962 residues: Leucine--tRNA ligase (962 aa).

Positions 68-79 (PYPSGAGLHVGH) match the 'HIGH' region motif. Residues 559-582 (DYSPRTFDPDDANTSPETPLSRNE) are disordered. A compositionally biased stretch (polar residues) spans 570–579 (ANTSPETPLS). Positions 733 to 737 (KMGKS) match the 'KMSKS' region motif. Lysine 736 contributes to the ATP binding site.

The protein belongs to the class-I aminoacyl-tRNA synthetase family.

Its subcellular location is the cytoplasm. It catalyses the reaction tRNA(Leu) + L-leucine + ATP = L-leucyl-tRNA(Leu) + AMP + diphosphate. The protein is Leucine--tRNA ligase of Streptomyces avermitilis (strain ATCC 31267 / DSM 46492 / JCM 5070 / NBRC 14893 / NCIMB 12804 / NRRL 8165 / MA-4680).